Consider the following 248-residue polypeptide: MRRKLVAGNWKMNGSLAANALLLAEIKAEFGNPACDVAVCVPAPYLAQCLSLLSDSTIALGAQDVSSHDSGAYTGEVSTAMLLEFACRYVIVGHSERRAYFGETNELVAQKTVRALSAGLMPIVCVGETLEQREAGQTDEVVGRQIDAVLSSIAENDLAKIVVAYEPVWAIGTGKTATPEMAQEVHVMLRRRLHAKNAQAATEVRILYGGSMKPDNAKELLAMPDIDGGLIGGAALKAADFLAIIRAA.

Position 9–11 (9–11 (NWK)) interacts with substrate. His-94 serves as the catalytic Electrophile. Glu-166 (proton acceptor) is an active-site residue. Residues Gly-172, Ser-211, and 232 to 233 (GG) each bind substrate.

Belongs to the triosephosphate isomerase family. As to quaternary structure, homodimer.

Its subcellular location is the cytoplasm. It carries out the reaction D-glyceraldehyde 3-phosphate = dihydroxyacetone phosphate. It participates in carbohydrate biosynthesis; gluconeogenesis. It functions in the pathway carbohydrate degradation; glycolysis; D-glyceraldehyde 3-phosphate from glycerone phosphate: step 1/1. In terms of biological role, involved in the gluconeogenesis. Catalyzes stereospecifically the conversion of dihydroxyacetone phosphate (DHAP) to D-glyceraldehyde-3-phosphate (G3P). This is Triosephosphate isomerase from Herminiimonas arsenicoxydans.